Reading from the N-terminus, the 69-residue chain is Mu-conotoxin-like Am3.3 (69 aa).

The N-terminal stretch at 1-20 (MMSKLGVLLTICLLLFPLTA) is a signal peptide. The propeptide occupies 21 to 52 (VPLDGDQPADRPAERMQDDISSENHPMFDAIR). Residue Cys68 is modified to Cysteine amide.

This sequence belongs to the conotoxin M family. In terms of processing, is not hydroxylated. Post-translationally, contains 3 disulfide bonds. As to expression, expressed by the venom duct.

It localises to the secreted. Mu-conotoxins block voltage-gated sodium channels (Nav). This Conus amadis (Amadis cone) protein is Mu-conotoxin-like Am3.3.